The primary structure comprises 296 residues: Homeobox protein SIX2 (296 aa).

The homeobox DNA-binding region spans 124-183 (GEETSYCFKEKSRSVLREWYAHNPYPSPREKRELAEATGLTTTQVSNWFKNRRQRDRAAE). The disordered stretch occupies residues 168 to 284 (VSNWFKNRRQ…HHHSLQDSIL (117 aa)). A compositionally biased stretch (basic and acidic residues) spans 179-190 (DRAAEAKERENS). Low complexity-rich tracts occupy residues 191–206 (ENSN…SSLN) and 228–237 (HSSSSPALLL). The segment covering 254–264 (PPGPSAVPVPV) has biased composition (pro residues).

It belongs to the SIX/Sine oculis homeobox family. Interacts with TCF7L2; in a canonical Wnt signaling independent manner; prevents transcription of differentiation genes in cap mesenchyme. Interacts with OSR1; form a strong repressor complex with TCF7L2, TLE2 and TLE3 to prevent the activation of Wnt/beta-catenin target genes in the cap mesenchyme. Interacts with HOXA11, EYA1 and EYA3. As to expression, expressed in phalangeal tendons, in smooth muscle and in head and body mesenchyme.

It localises to the nucleus. In terms of biological role, transcription factor that plays an important role in the development of several organs, including kidney, skull and stomach. During kidney development, maintains cap mesenchyme multipotent nephron progenitor cells in an undifferentiated state by opposing the inductive signals emanating from the ureteric bud and cooperates with WNT9B to promote renewing progenitor cells proliferation. Acts through its interaction with TCF7L2 and OSR1 in a canonical Wnt signaling independent manner preventing transcription of differentiation genes in cap mesenchyme such as WNT4. Also acts independently of OSR1 to activate expression of many cap mesenchyme genes, including itself, GDNF and OSR1. During craniofacial development plays a role in growth and elongation of the cranial base through regulation of chondrocyte differentiation. During stomach organogenesis, controls pyloric sphincter formation and mucosal growth through regulation of a gene network including NKX2-5, BMPR1B, BMP4, SOX9 and GREM1. During branchial arch development, acts to mediate HOXA2 control over the insulin-like growth factor pathway. May also be involved in limb tendon and ligament development. Plays a role in cell proliferation and migration. The polypeptide is Homeobox protein SIX2 (Six2) (Mus musculus (Mouse)).